Reading from the N-terminus, the 370-residue chain is 3-isopropylmalate dehydrogenase (370 aa).

77 to 90 serves as a coordination point for NAD(+); sequence GAKWDGVPYEARPE. Residues R97, R107, R135, and D226 each coordinate substrate. 3 residues coordinate Mg(2+): D226, D250, and D254. 290-302 contributes to the NAD(+) binding site; that stretch reads GSAPDIAGKGLAN.

Belongs to the isocitrate and isopropylmalate dehydrogenases family. LeuB type 1 subfamily. Homodimer. Requires Mg(2+) as cofactor. Mn(2+) is required as a cofactor.

The protein resides in the cytoplasm. The catalysed reaction is (2R,3S)-3-isopropylmalate + NAD(+) = 4-methyl-2-oxopentanoate + CO2 + NADH. It participates in amino-acid biosynthesis; L-leucine biosynthesis; L-leucine from 3-methyl-2-oxobutanoate: step 3/4. Catalyzes the oxidation of 3-carboxy-2-hydroxy-4-methylpentanoate (3-isopropylmalate) to 3-carboxy-4-methyl-2-oxopentanoate. The product decarboxylates to 4-methyl-2 oxopentanoate. This Rhodopseudomonas palustris (strain BisB18) protein is 3-isopropylmalate dehydrogenase.